The following is an 88-amino-acid chain: UPF0213 protein SAG0778 (88 aa).

One can recognise a GIY-YIG domain in the interval 4 to 80; it reads VPAYMYVLEC…QKTRQAKLTY (77 aa).

This sequence belongs to the UPF0213 family.

The chain is UPF0213 protein SAG0778 from Streptococcus agalactiae serotype V (strain ATCC BAA-611 / 2603 V/R).